A 792-amino-acid chain; its full sequence is Protocadherin beta-18 (792 aa).

Positions M1–A26 are cleaved as a signal peptide. Cadherin domains lie at G27 to F133, Q134 to F242, P243 to L347, I348 to F451, N452 to V561, and A568 to V676. N-linked (GlcNAc...) asparagine glycosylation is present at N169. 2 N-linked (GlcNAc...) asparagine glycosylation sites follow: N418 and N452. The chain crosses the membrane as a helical span at residues V693–V713.

The protein resides in the cell membrane. Functionally, potential calcium-dependent cell-adhesion protein. The chain is Protocadherin beta-18 (Pcdhb18) from Mus musculus (Mouse).